A 927-amino-acid chain; its full sequence is Probable RNA-dependent RNA polymerase 4 (927 aa).

A disordered region spans residues 98-135; sequence GESPVQFPRTPGKKSCRASQAEVSLDREDPSPKFLRGD. Positions 121–135 are enriched in basic and acidic residues; sequence SLDREDPSPKFLRGD.

This sequence belongs to the RdRP family.

It carries out the reaction RNA(n) + a ribonucleoside 5'-triphosphate = RNA(n+1) + diphosphate. Functionally, probably involved in the RNA silencing pathway and required for the generation of small interfering RNAs (siRNAs). In Arabidopsis thaliana (Mouse-ear cress), this protein is Probable RNA-dependent RNA polymerase 4 (RDR4).